Here is a 256-residue protein sequence, read N- to C-terminus: Matrix protein (256 aa).

This sequence belongs to the pneumovirinae M protein family. Forms dimers. Forms higher-order oligomers. Interacts with glycoprotein G (via N-terminus). Interacts with protein M2-1; this interaction directs the matrix protein localization to cytoplasmic inclusions comprising viral proteins L, N, P, and M2-1 and mediates the matrix protein association with the nucleocapsid.

It localises to the virion. The protein localises to the host cytoplasm. The protein resides in the host nucleus. It is found in the host cell membrane. Its function is as follows. Plays a crucial role in virus assembly into filaments and budding. Early in infection, localizes in the nucleus where it may inhibit host cell transcription. Later in infection, traffics to the cytoplasm to associate with inclusion bodies, the site of viral transcription and replication. During virus assembly and budding, acts as a bridge between the nucleocapsid and the lipid bilayer. In Ovine respiratory syncytial virus (strain WSU 83-1578) (ORSV), this protein is Matrix protein (M).